The following is a 451-amino-acid chain: Phosphoglucosamine mutase (451 aa).

Catalysis depends on serine 107, which acts as the Phosphoserine intermediate. Residues serine 107, aspartate 246, aspartate 248, and aspartate 250 each coordinate Mg(2+). Position 107 is a phosphoserine (serine 107).

The protein belongs to the phosphohexose mutase family. Mg(2+) is required as a cofactor. In terms of processing, activated by phosphorylation.

It catalyses the reaction alpha-D-glucosamine 1-phosphate = D-glucosamine 6-phosphate. Functionally, catalyzes the conversion of glucosamine-6-phosphate to glucosamine-1-phosphate. In Azoarcus sp. (strain BH72), this protein is Phosphoglucosamine mutase.